Here is a 157-residue protein sequence, read N- to C-terminus: MAKSKNHTTHNQSRKWHRNGIKKPRSQRYESLKGVDPKFLRNMRFAKKHNKKGLRKMQTNNAKAMSARAEAVKALVKPKEVKPKIPKGVSRKLDRLAYIAHPKLGKRARARIAKGLRLCRPKAKAKAKDQTKAQAAAPASIPAQAPKGAQATTKATE.

Positions 1–26 are enriched in basic residues; that stretch reads MAKSKNHTTHNQSRKWHRNGIKKPRS. Residues 1–32 form a disordered region; it reads MAKSKNHTTHNQSRKWHRNGIKKPRSQRYESL. At Lys-5 the chain carries N6-methyllysine. Ser-31 carries the phosphoserine modification. The residue at position 33 (Lys-33) is an N6-acetyllysine. Residues 121–157 form a disordered region; the sequence is PKAKAKAKDQTKAQAAAPASIPAQAPKGAQATTKATE. Residues 132–147 show a composition bias toward low complexity; that stretch reads KAQAAAPASIPAQAPK. The residue at position 140 (Ser-140) is a Phosphoserine.

This sequence belongs to the eukaryotic ribosomal protein eL29 family. As to quaternary structure, component of the large ribosomal subunit.

The protein localises to the cytoplasm. In terms of biological role, component of the large ribosomal subunit. The ribosome is a large ribonucleoprotein complex responsible for the synthesis of proteins in the cell. This Macaca fascicularis (Crab-eating macaque) protein is Large ribosomal subunit protein eL29 (RPL29).